The sequence spans 250 residues: Probable xyloglucan-specific endo-beta-1,4-glucanase A (250 aa).

An N-terminal signal peptide occupies residues 1-19 (MKLSVLSLASLASAAALNA). N72 is a glycosylation site (N-linked (GlcNAc...) asparagine).

Belongs to the glycosyl hydrolase 12 (cellulase H) family.

The protein resides in the secreted. The catalysed reaction is xyloglucan + H2O = xyloglucan oligosaccharides.. Catalyzes endohydrolysis of 1,4-beta-D-glucosidic linkages in xyloglucan with retention of the beta-configuration of the glycosyl residues. Specific for xyloglucan and does not hydrolyze other cell wall components. This chain is Probable xyloglucan-specific endo-beta-1,4-glucanase A (xgeA), found in Aspergillus terreus (strain NIH 2624 / FGSC A1156).